Consider the following 155-residue polypeptide: DNA-binding protein inhibitor ID-1 (155 aa).

One can recognise a bHLH domain in the interval 53-105 (LPALLDEQQVNVLLYDMNGCYSRLKELVPTLPQNRKVSKVEILQHVIDYIRDL). The Nuclear export signal motif lies at 98-111 (VIDYIRDLQLELNS).

Heterodimer with other HLH proteins. Interacts with COPS5, IFI204, GATA4 and NKX2-5. Interacts with CLOCK and BMAL1.

The protein resides in the cytoplasm. It localises to the nucleus. Functionally, transcriptional regulator (lacking a basic DNA binding domain) which negatively regulates the basic helix-loop-helix (bHLH) transcription factors by forming heterodimers and inhibiting their DNA binding and transcriptional activity. Implicated in regulating a variety of cellular processes, including cellular growth, senescence, differentiation, apoptosis, angiogenesis, and neoplastic transformation. Inhibits skeletal muscle and cardiac myocyte differentiation. Regulates the circadian clock by repressing the transcriptional activator activity of the CLOCK-BMAL1 heterodimer. The sequence is that of DNA-binding protein inhibitor ID-1 (ID1) from Homo sapiens (Human).